Reading from the N-terminus, the 265-residue chain is HUWE1-associated protein modifying stress responses (265 aa).

4 disordered regions span residues 1–22 (MEDK…HWFS), 145–170 (RNSR…GSSV), 195–218 (VRSS…RRNG), and 240–265 (GTRK…NRMI). 2 stretches are compositionally biased toward polar residues: residues 156–170 (VSPN…GSSV) and 195–212 (VRSS…SSNT).

It belongs to the TAPR1 family. In terms of assembly, oligomer.

It is found in the nucleus. Its subcellular location is the cytoplasm. Functionally, acts as a central player within a network of stress response pathways promoting cellular adaptability. Functions as a negative regulator of TP53/P53 in the cellular response to telomere erosion and probably also DNA damage. This Xenopus laevis (African clawed frog) protein is HUWE1-associated protein modifying stress responses.